The primary structure comprises 635 residues: Biosynthetic arginine decarboxylase (635 aa).

Lysine 100 carries the post-translational modification N6-(pyridoxal phosphate)lysine. Valine 282–tyrosine 292 provides a ligand contact to substrate.

The protein belongs to the Orn/Lys/Arg decarboxylase class-II family. SpeA subfamily. It depends on Mg(2+) as a cofactor. Pyridoxal 5'-phosphate is required as a cofactor.

The enzyme catalyses L-arginine + H(+) = agmatine + CO2. Its pathway is amine and polyamine biosynthesis; agmatine biosynthesis; agmatine from L-arginine: step 1/1. Its function is as follows. Catalyzes the biosynthesis of agmatine from arginine. The sequence is that of Biosynthetic arginine decarboxylase from Geotalea daltonii (strain DSM 22248 / JCM 15807 / FRC-32) (Geobacter daltonii).